The sequence spans 374 residues: Guanine nucleotide-binding protein subunit alpha-15 (374 aa).

Positions 41-374 (GELKLLLLGP…ARYLDEINLL (334 aa)) constitute a G-alpha domain. Residues 44 to 57 (KLLLLGPGESGKST) form a G1 motif region. GTP is bound by residues 49 to 56 (GPGESGKS), 183 to 189 (LRSRMPT), 208 to 212 (DAGGQ), 277 to 280 (NKTD), and Ala346. Ser56 and Thr189 together coordinate Mg(2+). Residues 181–189 (DVLRSRMPT) are G2 motif. Residues 204–213 (LRIVDAGGQK) are G3 motif. Positions 273–280 (ILFLNKTD) are G4 motif. The segment at 344 to 349 (TCATDT) is G5 motif.

It belongs to the G-alpha family. G(q) subfamily. G proteins are composed of 3 units; alpha, beta and gamma. The alpha chain contains the guanine nucleotide binding site.

Guanine nucleotide-binding proteins (G proteins) are involved as modulators or transducers in various transmembrane signaling systems. This chain is Guanine nucleotide-binding protein subunit alpha-15 (Gna15), found in Rattus norvegicus (Rat).